A 602-amino-acid chain; its full sequence is Sulfite reductase [NADPH] flavoprotein alpha-component (602 aa).

Positions 68–206 (ITIISASQTG…NYIQWSEELL (139 aa)) constitute a Flavodoxin-like domain. FMN-binding positions include 74–79 (SQTGNA), 121–124 (STQG), and 157–166 (LGDVSYNLFC). Residues 237–451 (YKPAVATVLL…VEEKSNFRLP (215 aa)) form the FAD-binding FR-type domain. FAD contacts are provided by residues T325, K359, 389-392 (RLYS), 407-409 (TVG), and 422-425 (GGSS). Residues 522 to 523 (SR), 528 to 532 (KIYVQ), and D564 contribute to the NADP(+) site. Y602 contacts FAD.

Belongs to the NADPH-dependent sulphite reductase flavoprotein subunit CysJ family. This sequence in the N-terminal section; belongs to the flavodoxin family. It in the C-terminal section; belongs to the flavoprotein pyridine nucleotide cytochrome reductase family. Alpha(8)-beta(8). The alpha component is a flavoprotein, the beta component is a hemoprotein. FAD is required as a cofactor. Requires FMN as cofactor.

It catalyses the reaction hydrogen sulfide + 3 NADP(+) + 3 H2O = sulfite + 3 NADPH + 4 H(+). It participates in sulfur metabolism; hydrogen sulfide biosynthesis; hydrogen sulfide from sulfite (NADPH route): step 1/1. In terms of biological role, component of the sulfite reductase complex that catalyzes the 6-electron reduction of sulfite to sulfide. This is one of several activities required for the biosynthesis of L-cysteine from sulfate. The flavoprotein component catalyzes the electron flow from NADPH -&gt; FAD -&gt; FMN to the hemoprotein component. This Buchnera aphidicola subsp. Schizaphis graminum (strain Sg) protein is Sulfite reductase [NADPH] flavoprotein alpha-component.